A 371-amino-acid chain; its full sequence is Protein OSB2, chloroplastic (371 aa).

The transit peptide at 1-20 directs the protein to the chloroplast; the sequence is MSLISKSLARIECSPFFYPR. The interval 45 to 64 is disordered; sequence GKTGNGERKQRAKAPAKTPE. Positions 97–195 constitute an SSB domain; the sequence is VANWVNLIGF…VLVQNLNFIQ (99 aa). PDF region regions lie at residues 237–289 and 312–360; these read WNHL…PKLE and WKDL…PKLP.

In terms of tissue distribution, expressed in the floral abscission zone.

It localises to the plastid. Its subcellular location is the chloroplast. Binds preferentially single-stranded DNA. Does not bind to RNA. The polypeptide is Protein OSB2, chloroplastic (OSB2) (Arabidopsis thaliana (Mouse-ear cress)).